The sequence spans 740 residues: Folic acid synthesis protein fol1 (740 aa).

2 DHNA regions span residues 39–160 and 161–280; these read DLIH…REID and DQFF…SCFS. An HPPK region spans residues 291–449; that stretch reads IDNEAVYISL…EKIVDHDIKP (159 aa). The Pterin-binding domain occupies 471–730; that stretch reads TYIMAILNLT…DVYEMYKISK (260 aa). The interval 473-740 is DHPS; sequence IMAILNLTPD…MSDAIWKEIY (268 aa). N478 is a binding site for Mg(2+). (7,8-dihydropterin-6-yl)methyl diphosphate-binding positions include T517, D552, N571, D643, K683, and 718 to 720; that span reads RVH.

The protein in the N-terminal section; belongs to the DHNA family. This sequence in the central section; belongs to the HPPK family. It in the C-terminal section; belongs to the DHPS family. Mg(2+) is required as a cofactor.

The catalysed reaction is 7,8-dihydroneopterin = 6-hydroxymethyl-7,8-dihydropterin + glycolaldehyde. The enzyme catalyses 6-hydroxymethyl-7,8-dihydropterin + ATP = (7,8-dihydropterin-6-yl)methyl diphosphate + AMP + H(+). It carries out the reaction (7,8-dihydropterin-6-yl)methyl diphosphate + 4-aminobenzoate = 7,8-dihydropteroate + diphosphate. The protein operates within cofactor biosynthesis; tetrahydrofolate biosynthesis; 2-amino-4-hydroxy-6-hydroxymethyl-7,8-dihydropteridine diphosphate from 7,8-dihydroneopterin triphosphate: step 3/4. It participates in cofactor biosynthesis; tetrahydrofolate biosynthesis; 2-amino-4-hydroxy-6-hydroxymethyl-7,8-dihydropteridine diphosphate from 7,8-dihydroneopterin triphosphate: step 4/4. It functions in the pathway cofactor biosynthesis; tetrahydrofolate biosynthesis; 7,8-dihydrofolate from 2-amino-4-hydroxy-6-hydroxymethyl-7,8-dihydropteridine diphosphate and 4-aminobenzoate: step 1/2. In terms of biological role, catalyzes three sequential steps of tetrahydrofolate biosynthesis. The protein is Folic acid synthesis protein fol1 (fol1) of Pneumocystis carinii.